We begin with the raw amino-acid sequence, 637 residues long: Biosynthetic arginine decarboxylase (637 aa).

Lysine 101 carries the N6-(pyridoxal phosphate)lysine modification. 286–296 (FDVGGGLAVDY) is a binding site for substrate.

Belongs to the Orn/Lys/Arg decarboxylase class-II family. SpeA subfamily. The cofactor is Mg(2+). Pyridoxal 5'-phosphate is required as a cofactor.

The catalysed reaction is L-arginine + H(+) = agmatine + CO2. Its pathway is amine and polyamine biosynthesis; agmatine biosynthesis; agmatine from L-arginine: step 1/1. In terms of biological role, catalyzes the biosynthesis of agmatine from arginine. The polypeptide is Biosynthetic arginine decarboxylase (Shewanella baltica (strain OS195)).